The chain runs to 445 residues: MAFSARFPLWLLLGVVLLASVSASFAHSGHSGGEAEDESEESRAQNNPYLFRSNKFLTLFKNQHGSLRLLQRFNEDTEKLENLRDYRVLEYCSKPNTLLLPHHSDSDLLVLVLEGQAILVLVNPDGRDTYKLDQGDAIKIQAGTPFYLINPDNNQNLRILNFAITFRRPGTVEDFFLSSTKRLPSYLSAFSKNFLEASYDSPYDEIEQTLLQEEQEGVIVKMPKDQIQEISKHAQSSSRKTLSSQDKPFNLRSRDPIYSNNYGKLYEITPEKNSQLRDLDILLNCLQMNEGALFVPHYNSRATVILVANEGRAEVELVGLEQQQQQGLESMQLRRYAATLSEGDILVIPSSFPVALKAASDLNMVGIGVNAENNERNFLAGNKENVIRQIPRQVSDLTFPGSGEEVEELLENQKESYFVDGQPRHIDAGGKARRAHLPNLFRTFY.

The first 26 residues, 1-26 (MAFSARFPLWLLLGVVLLASVSASFA), serve as a signal peptide directing secretion. Cupin type-1 domains follow at residues 49-207 (YLFR…DEIE) and 249-407 (FNLR…EEVE).

The protein belongs to the 7S seed storage protein family. Homotrimer.

In terms of biological role, seed storage protein. The sequence is that of Canavalin from Canavalia gladiata (Sword bean).